The chain runs to 119 residues: MKVLLGLLLGYSVLILAHELPRTQHPPKEELPYWCTYVKNCDFCWDCQNGICKNKITNESISMNSIVNCIVNRNSWGCFYEISVKMPNHHNMECSHPRPYTGNEIFMEKWGGVIIGQSL.

Positions 1–17 are cleaved as a signal peptide; sequence MKVLLGLLLGYSVLILA.

Belongs to the asfivirus MGF 110 family.

In Ornithodoros (relapsing fever ticks), this protein is Protein MGF 110-11L.